The primary structure comprises 363 residues: MRWRFSTLEIILLLLVVAGSGMAYAWVVYGGGGLIGATYALFMCMPILAFERHIIFRRLYRRIHGSPTPAFLLSSLAVYFIFVNVGYAAAGLLLHVAGVMRESRTDAMLPSLNVLVYALATSGPIIFVLRVRELLGRDVFLSLLTGRYRKPVQEERVFLFIDLAGSTSLAERFGDLRMQEYLGKLFAAMADPVLRYGGSIDDYVGDAAVITWPYDRAVADAACIRCVFDILEQIEADAHRWQKDYGEVPRLRAALHGGTIVAAEIGVDKHKITYFGDTVNTTARLEGLCRTLNRQVLISADLLRRLRPPVFVRAEDLGEHEVKGRGQKLAVLSLTAGSLSGDGATEPAGETVRSPAAEAFTSL.

The 130-residue stretch at 157 to 286 (VFLFIDLAGS…DTVNTTARLE (130 aa)) folds into the Guanylate cyclase domain. 2 residues coordinate Mg(2+): Asp162 and Asp206. Residues 341–363 (GDGATEPAGETVRSPAAEAFTSL) form a disordered region.

It belongs to the adenylyl cyclase class-3 family. The cofactor is Mg(2+).

The enzyme catalyses ATP = 3',5'-cyclic AMP + diphosphate. Plays essential roles in regulation of cellular metabolism by catalyzing the synthesis of a second messenger, cAMP. The polypeptide is Adenylate cyclase 2 (cya2) (Rhizobium meliloti (strain 1021) (Ensifer meliloti)).